The following is a 287-amino-acid chain: MAADAHAPTASEYIVHHLQHLQNIKQKSIIDFSVVNLDSVAVSVILGVLGLFVMWLAARTATSGVPGRFQAAVEMLVEMVDNQAKANIHNAQSRKFIAPLALTVFVWIFLMNAMDLLPVDLLPVLWQGATGDSHAYLRVVPTADLSTTLGLSSAVLILCFVYSIKIKGMGGWAHELVTAPFGTSKNPVFALILGVVNLLMQIIEYVAKTVSHGMRLFGNMYAGELVFMLIALMGGAAAMSLSGVLLPVGHIIAGSIWAIFHILIITLQAFIFMMLTLIYLGQAHEAH.

6 helical membrane-spanning segments follow: residues 37–57 (LDSV…MWLA), 96–116 (FIAP…AMDL), 144–164 (DLST…VYSI), 187–207 (PVFA…EYVA), 224–244 (ELVF…LSGV), and 266–286 (TLQA…AHEA).

Belongs to the ATPase A chain family. As to quaternary structure, F-type ATPases have 2 components, CF(1) - the catalytic core - and CF(0) - the membrane proton channel. CF(1) has five subunits: alpha(3), beta(3), gamma(1), delta(1), epsilon(1). CF(0) has three main subunits: a(1), b(2) and c(9-12). The alpha and beta chains form an alternating ring which encloses part of the gamma chain. CF(1) is attached to CF(0) by a central stalk formed by the gamma and epsilon chains, while a peripheral stalk is formed by the delta and b chains.

It localises to the cell inner membrane. In terms of biological role, key component of the proton channel; it plays a direct role in the translocation of protons across the membrane. The protein is ATP synthase subunit a of Acidovorax ebreus (strain TPSY) (Diaphorobacter sp. (strain TPSY)).